Reading from the N-terminus, the 410-residue chain is UDP-N-acetylglucosamine--N-acetylmuramyl-(pentapeptide) pyrophosphoryl-undecaprenol N-acetylglucosamine transferase (410 aa).

The tract at residues 1–35 is disordered; that stretch reads MKDTVSQPAGGRGATAPRPADAASPSCGSSPSADS. Low complexity predominate over residues 14 to 35; sequence ATAPRPADAASPSCGSSPSADS. UDP-N-acetyl-alpha-D-glucosamine contacts are provided by residues 45-47, asparagine 167, arginine 204, serine 238, and glutamine 334; that span reads TAG.

It belongs to the glycosyltransferase 28 family. MurG subfamily.

It is found in the cell membrane. The catalysed reaction is di-trans,octa-cis-undecaprenyl diphospho-N-acetyl-alpha-D-muramoyl-L-alanyl-D-glutamyl-meso-2,6-diaminopimeloyl-D-alanyl-D-alanine + UDP-N-acetyl-alpha-D-glucosamine = di-trans,octa-cis-undecaprenyl diphospho-[N-acetyl-alpha-D-glucosaminyl-(1-&gt;4)]-N-acetyl-alpha-D-muramoyl-L-alanyl-D-glutamyl-meso-2,6-diaminopimeloyl-D-alanyl-D-alanine + UDP + H(+). The protein operates within cell wall biogenesis; peptidoglycan biosynthesis. Cell wall formation. Catalyzes the transfer of a GlcNAc subunit on undecaprenyl-pyrophosphoryl-MurNAc-pentapeptide (lipid intermediate I) to form undecaprenyl-pyrophosphoryl-MurNAc-(pentapeptide)GlcNAc (lipid intermediate II). This chain is UDP-N-acetylglucosamine--N-acetylmuramyl-(pentapeptide) pyrophosphoryl-undecaprenol N-acetylglucosamine transferase, found in Mycobacterium tuberculosis (strain ATCC 25177 / H37Ra).